The primary structure comprises 690 residues: Elongation factor G (690 aa).

Residues 8 to 282 form the tr-type G domain; it reads ERVRNIGIAA…AVIDYLPAPV (275 aa). Residues 17–24, 81–85, and 135–138 each bind GTP; these read AHIDAGKT, DTPGH, and NKMD.

The protein belongs to the TRAFAC class translation factor GTPase superfamily. Classic translation factor GTPase family. EF-G/EF-2 subfamily.

The protein resides in the cytoplasm. In terms of biological role, catalyzes the GTP-dependent ribosomal translocation step during translation elongation. During this step, the ribosome changes from the pre-translocational (PRE) to the post-translocational (POST) state as the newly formed A-site-bound peptidyl-tRNA and P-site-bound deacylated tRNA move to the P and E sites, respectively. Catalyzes the coordinated movement of the two tRNA molecules, the mRNA and conformational changes in the ribosome. The sequence is that of Elongation factor G from Parasynechococcus marenigrum (strain WH8102).